The chain runs to 380 residues: Probable dual-specificity RNA methyltransferase RlmN (380 aa).

E112 (proton acceptor) is an active-site residue. One can recognise a Radical SAM core domain in the interval 118–358 (YPDRVTACLS…TTVRDTRGRE (241 aa)). C125 and C363 are oxidised to a cystine. [4Fe-4S] cluster-binding residues include C132, C136, and C139. Residues 187-188 (GE), S221, 244-246 (SLH), and N320 contribute to the S-adenosyl-L-methionine site. The active-site S-methylcysteine intermediate is the C363.

Belongs to the radical SAM superfamily. RlmN family. [4Fe-4S] cluster is required as a cofactor.

It is found in the cytoplasm. It carries out the reaction adenosine(2503) in 23S rRNA + 2 reduced [2Fe-2S]-[ferredoxin] + 2 S-adenosyl-L-methionine = 2-methyladenosine(2503) in 23S rRNA + 5'-deoxyadenosine + L-methionine + 2 oxidized [2Fe-2S]-[ferredoxin] + S-adenosyl-L-homocysteine. The catalysed reaction is adenosine(37) in tRNA + 2 reduced [2Fe-2S]-[ferredoxin] + 2 S-adenosyl-L-methionine = 2-methyladenosine(37) in tRNA + 5'-deoxyadenosine + L-methionine + 2 oxidized [2Fe-2S]-[ferredoxin] + S-adenosyl-L-homocysteine. Functionally, specifically methylates position 2 of adenine 2503 in 23S rRNA and position 2 of adenine 37 in tRNAs. The polypeptide is Probable dual-specificity RNA methyltransferase RlmN (Salinispora arenicola (strain CNS-205)).